A 221-amino-acid polypeptide reads, in one-letter code: Histidine biosynthesis bifunctional protein HisIE (221 aa).

Residues 1–129 (MAYSKNFSIE…AKKTSPFSNI (129 aa)) are phosphoribosyl-AMP cyclohydrolase. Residues 130 to 221 (CSELFDTLHE…VLESRRGKNN (92 aa)) form a phosphoribosyl-ATP pyrophosphohydrolase region.

The protein in the N-terminal section; belongs to the PRA-CH family. This sequence in the C-terminal section; belongs to the PRA-PH family.

The protein localises to the cytoplasm. The catalysed reaction is 1-(5-phospho-beta-D-ribosyl)-ATP + H2O = 1-(5-phospho-beta-D-ribosyl)-5'-AMP + diphosphate + H(+). It carries out the reaction 1-(5-phospho-beta-D-ribosyl)-5'-AMP + H2O = 1-(5-phospho-beta-D-ribosyl)-5-[(5-phospho-beta-D-ribosylamino)methylideneamino]imidazole-4-carboxamide. It participates in amino-acid biosynthesis; L-histidine biosynthesis; L-histidine from 5-phospho-alpha-D-ribose 1-diphosphate: step 2/9. The protein operates within amino-acid biosynthesis; L-histidine biosynthesis; L-histidine from 5-phospho-alpha-D-ribose 1-diphosphate: step 3/9. The protein is Histidine biosynthesis bifunctional protein HisIE of Prochlorococcus marinus subsp. pastoris (strain CCMP1986 / NIES-2087 / MED4).